Here is a 210-residue protein sequence, read N- to C-terminus: Protein RFS1 (210 aa).

In terms of domain architecture, Flavodoxin-like spans 4–203 (VAILIYSVDD…RVHQLQGKAF (200 aa)).

This sequence belongs to the WrbA family.

It is found in the cytoplasm. The protein resides in the membrane raft. The protein is Protein RFS1 (RFS1) of Saccharomyces cerevisiae (strain ATCC 204508 / S288c) (Baker's yeast).